Consider the following 365-residue polypeptide: tRNA N6-adenosine threonylcarbamoyltransferase (365 aa).

Positions 119 and 123 each coordinate Fe cation. Substrate is bound by residues 141–145 (LVSGG), Asp-174, Gly-187, and Asn-288. Asp-316 contributes to the Fe cation binding site.

This sequence belongs to the KAE1 / TsaD family. It depends on Fe(2+) as a cofactor.

It is found in the cytoplasm. The enzyme catalyses L-threonylcarbamoyladenylate + adenosine(37) in tRNA = N(6)-L-threonylcarbamoyladenosine(37) in tRNA + AMP + H(+). Required for the formation of a threonylcarbamoyl group on adenosine at position 37 (t(6)A37) in tRNAs that read codons beginning with adenine. Is involved in the transfer of the threonylcarbamoyl moiety of threonylcarbamoyl-AMP (TC-AMP) to the N6 group of A37, together with TsaE and TsaB. TsaD likely plays a direct catalytic role in this reaction. The polypeptide is tRNA N6-adenosine threonylcarbamoyltransferase (Rhizobium leguminosarum bv. trifolii (strain WSM2304)).